The primary structure comprises 520 residues: Putative tyrosine carboxypeptidase MATCAP2 (520 aa).

Residues 116–153 (EEKKYHSQKQSSSTYSKRCRKPSKSPNTSRSKDPRRMK) are disordered. His331 is a binding site for Zn(2+). Residue Glu332 is the Nucleophile of the active site. Residues His336 and Glu367 each coordinate Zn(2+).

Requires Zn(2+) as cofactor.

Its function is as follows. Putative tyrosine carboxypeptidase. This Homo sapiens (Human) protein is Putative tyrosine carboxypeptidase MATCAP2.